A 386-amino-acid chain; its full sequence is Succinyl-diaminopimelate desuccinylase (386 aa).

Histidine 75 contacts Zn(2+). Residue aspartate 77 is part of the active site. Aspartate 108 is a binding site for Zn(2+). The Proton acceptor role is filled by glutamate 138. 3 residues coordinate Zn(2+): glutamate 139, glutamate 167, and histidine 356.

The protein belongs to the peptidase M20A family. DapE subfamily. In terms of assembly, homodimer. The cofactor is Zn(2+). Co(2+) is required as a cofactor.

It carries out the reaction N-succinyl-(2S,6S)-2,6-diaminopimelate + H2O = (2S,6S)-2,6-diaminopimelate + succinate. Its pathway is amino-acid biosynthesis; L-lysine biosynthesis via DAP pathway; LL-2,6-diaminopimelate from (S)-tetrahydrodipicolinate (succinylase route): step 3/3. Catalyzes the hydrolysis of N-succinyl-L,L-diaminopimelic acid (SDAP), forming succinate and LL-2,6-diaminopimelate (DAP), an intermediate involved in the bacterial biosynthesis of lysine and meso-diaminopimelic acid, an essential component of bacterial cell walls. The polypeptide is Succinyl-diaminopimelate desuccinylase (Caulobacter vibrioides (strain ATCC 19089 / CIP 103742 / CB 15) (Caulobacter crescentus)).